A 277-amino-acid polypeptide reads, in one-letter code: Large ribosomal subunit protein uL2 (277 aa).

Residues 223 to 261 (SVMNPNDHPHGGGEGKSPVGRPSPVTPWGKPALGYKTRK) form a disordered region.

The protein belongs to the universal ribosomal protein uL2 family. Part of the 50S ribosomal subunit. Forms a bridge to the 30S subunit in the 70S ribosome.

One of the primary rRNA binding proteins. Required for association of the 30S and 50S subunits to form the 70S ribosome, for tRNA binding and peptide bond formation. It has been suggested to have peptidyltransferase activity; this is somewhat controversial. Makes several contacts with the 16S rRNA in the 70S ribosome. The sequence is that of Large ribosomal subunit protein uL2 from Clostridium botulinum (strain Alaska E43 / Type E3).